Consider the following 180-residue polypeptide: ATP synthase subunit b (180 aa).

The helical transmembrane segment at 15–35 (LIPEVPELVIGLLAFAIVFFV) threads the bilayer.

This sequence belongs to the ATPase B chain family. F-type ATPases have 2 components, F(1) - the catalytic core - and F(0) - the membrane proton channel. F(1) has five subunits: alpha(3), beta(3), gamma(1), delta(1), epsilon(1). F(0) has three main subunits: a(1), b(2) and c(10-14). The alpha and beta chains form an alternating ring which encloses part of the gamma chain. F(1) is attached to F(0) by a central stalk formed by the gamma and epsilon chains, while a peripheral stalk is formed by the delta and b chains.

The protein resides in the cell membrane. Functionally, f(1)F(0) ATP synthase produces ATP from ADP in the presence of a proton or sodium gradient. F-type ATPases consist of two structural domains, F(1) containing the extramembraneous catalytic core and F(0) containing the membrane proton channel, linked together by a central stalk and a peripheral stalk. During catalysis, ATP synthesis in the catalytic domain of F(1) is coupled via a rotary mechanism of the central stalk subunits to proton translocation. In terms of biological role, component of the F(0) channel, it forms part of the peripheral stalk, linking F(1) to F(0). In Streptomyces avermitilis (strain ATCC 31267 / DSM 46492 / JCM 5070 / NBRC 14893 / NCIMB 12804 / NRRL 8165 / MA-4680), this protein is ATP synthase subunit b.